Consider the following 59-residue polypeptide: Large ribosomal subunit protein eL29 (59 aa).

Residues 1–26 show a composition bias toward basic residues; that stretch reads MAKSKNHTAHNQTRKAHRNGIKKPKT. Positions 1–37 are disordered; the sequence is MAKSKNHTAHNQTRKAHRNGIKKPKTYKYPSLKGVDP. Lys52 is covalently cross-linked (Glycyl lysine isopeptide (Lys-Gly) (interchain with G-Cter in ubiquitin)).

Belongs to the eukaryotic ribosomal protein eL29 family. As to quaternary structure, component of the large ribosomal subunit (LSU). Mature yeast ribosomes consist of a small (40S) and a large (60S) subunit. The 40S small subunit contains 1 molecule of ribosomal RNA (18S rRNA) and 33 different proteins (encoded by 57 genes). The large 60S subunit contains 3 rRNA molecules (25S, 5.8S and 5S rRNA) and 46 different proteins (encoded by 81 genes).

It localises to the cytoplasm. Its function is as follows. Component of the ribosome, a large ribonucleoprotein complex responsible for the synthesis of proteins in the cell. The small ribosomal subunit (SSU) binds messenger RNAs (mRNAs) and translates the encoded message by selecting cognate aminoacyl-transfer RNA (tRNA) molecules. The large subunit (LSU) contains the ribosomal catalytic site termed the peptidyl transferase center (PTC), which catalyzes the formation of peptide bonds, thereby polymerizing the amino acids delivered by tRNAs into a polypeptide chain. The nascent polypeptides leave the ribosome through a tunnel in the LSU and interact with protein factors that function in enzymatic processing, targeting, and the membrane insertion of nascent chains at the exit of the ribosomal tunnel. The polypeptide is Large ribosomal subunit protein eL29 (Saccharomyces cerevisiae (strain ATCC 204508 / S288c) (Baker's yeast)).